Here is a 463-residue protein sequence, read N- to C-terminus: Serine/threonine-protein kinase tricornered (463 aa).

Residues 93 to 394 enclose the Protein kinase domain; the sequence is FEALKVIGRG…LEDLKSVPFF (302 aa). Residues 99 to 107 and Lys122 contribute to the ATP site; that span reads IGRGAFGEV. The interaction with mats and Mob1 stretch occupies residues 119 to 180; the sequence is YAMKVLRKAD…EFLPGGDMMT (62 aa). The active-site Proton acceptor is Asp216. Phosphoserine is present on Ser292. In terms of domain architecture, AGC-kinase C-terminal spans 395-463; that stretch reads RGVDWEHIRE…YKRFEVRNLE (69 aa). Thr453 carries the post-translational modification Phosphothreonine.

It belongs to the protein kinase superfamily. AGC Ser/Thr protein kinase family. In terms of assembly, interacts with, and is activated by, Mob1. Requires Mg(2+) as cofactor. Expressed in the peripheral and central nervous system (at protein level). Expressed in the wing imaginal disk.

It localises to the cytoplasm. Its subcellular location is the nucleus. It catalyses the reaction L-seryl-[protein] + ATP = O-phospho-L-seryl-[protein] + ADP + H(+). The catalysed reaction is L-threonyl-[protein] + ATP = O-phospho-L-threonyl-[protein] + ADP + H(+). Its activity is regulated as follows. Activated by fry. Its function is as follows. Serine/threonine-protein kinase involved in controlling cell structure and proliferation of a variety of polarized outgrowths including epidermal hairs, bristles, arista laterals, and dendrites. Together with fry, maintains the integrity of epidermal hairs and is an essential component of the signaling pathway regulating dendritic branching of sensory neurons. Reduces neurite outgrowth by phosphorylating pav, thereby inhibiting its function in microtubule-microtubule sliding. The sequence is that of Serine/threonine-protein kinase tricornered from Drosophila melanogaster (Fruit fly).